A 1299-amino-acid polypeptide reads, in one-letter code: Phosphoribosylformylglycinamidine synthase (1299 aa).

Residues 310–321 (GAATGAGGEIRD), 389–391 (TGY), and alanine 680 each bind ATP. Residues aspartate 681, glutamate 720, asparagine 724, and aspartate 888 each coordinate Mg(2+). Serine 890 contributes to the ATP binding site. The region spanning 1046-1299 (VAVLREQGVN…MFRNARVWLG (254 aa)) is the Glutamine amidotransferase type-1 domain. Cysteine 1139 (nucleophile) is an active-site residue. Active-site residues include histidine 1264 and glutamate 1266.

It in the N-terminal section; belongs to the FGAMS family. In terms of assembly, monomer.

It localises to the cytoplasm. The enzyme catalyses N(2)-formyl-N(1)-(5-phospho-beta-D-ribosyl)glycinamide + L-glutamine + ATP + H2O = 2-formamido-N(1)-(5-O-phospho-beta-D-ribosyl)acetamidine + L-glutamate + ADP + phosphate + H(+). It participates in purine metabolism; IMP biosynthesis via de novo pathway; 5-amino-1-(5-phospho-D-ribosyl)imidazole from N(2)-formyl-N(1)-(5-phospho-D-ribosyl)glycinamide: step 1/2. Functionally, phosphoribosylformylglycinamidine synthase involved in the purines biosynthetic pathway. Catalyzes the ATP-dependent conversion of formylglycinamide ribonucleotide (FGAR) and glutamine to yield formylglycinamidine ribonucleotide (FGAM) and glutamate. This chain is Phosphoribosylformylglycinamidine synthase, found in Myxococcus xanthus (strain DK1622).